Reading from the N-terminus, the 314-residue chain is Methionyl-tRNA formyltransferase (314 aa).

113–116 provides a ligand contact to (6S)-5,6,7,8-tetrahydrofolate; that stretch reads SLLP.

This sequence belongs to the Fmt family.

The enzyme catalyses L-methionyl-tRNA(fMet) + (6R)-10-formyltetrahydrofolate = N-formyl-L-methionyl-tRNA(fMet) + (6S)-5,6,7,8-tetrahydrofolate + H(+). Attaches a formyl group to the free amino group of methionyl-tRNA(fMet). The formyl group appears to play a dual role in the initiator identity of N-formylmethionyl-tRNA by promoting its recognition by IF2 and preventing the misappropriation of this tRNA by the elongation apparatus. The polypeptide is Methionyl-tRNA formyltransferase (Pseudomonas syringae pv. syringae (strain B728a)).